A 321-amino-acid chain; its full sequence is Anthranilate phosphoribosyltransferase (321 aa).

5-phospho-alpha-D-ribose 1-diphosphate contacts are provided by residues G72, 75–76 (GD), T80, 82–85 (NVST), 99–107 (KHGNVSITS), and S111. An anthranilate-binding site is contributed by G72. Residue S84 coordinates Mg(2+). N102 serves as a coordination point for anthranilate. R157 is a binding site for anthranilate. Mg(2+) contacts are provided by D216 and E217.

The protein belongs to the anthranilate phosphoribosyltransferase family. Homodimer. Mg(2+) serves as cofactor.

The catalysed reaction is N-(5-phospho-beta-D-ribosyl)anthranilate + diphosphate = 5-phospho-alpha-D-ribose 1-diphosphate + anthranilate. Its pathway is amino-acid biosynthesis; L-tryptophan biosynthesis; L-tryptophan from chorismate: step 2/5. In terms of biological role, catalyzes the transfer of the phosphoribosyl group of 5-phosphorylribose-1-pyrophosphate (PRPP) to anthranilate to yield N-(5'-phosphoribosyl)-anthranilate (PRA). The polypeptide is Anthranilate phosphoribosyltransferase (Methanococcus maripaludis (strain C5 / ATCC BAA-1333)).